The following is a 130-amino-acid chain: Small ribosomal subunit protein eS8 (130 aa).

It belongs to the eukaryotic ribosomal protein eS8 family. Part of the 30S ribosomal subunit.

This Thermococcus gammatolerans (strain DSM 15229 / JCM 11827 / EJ3) protein is Small ribosomal subunit protein eS8.